Here is a 2760-residue protein sequence, read N- to C-terminus: A-kinase anchor protein 13 (2760 aa).

Disordered regions lie at residues Cys-356–Cys-388, Pro-442–Gln-517, Ala-530–Ala-577, Ser-604–Asn-711, Glu-729–Gly-857, Gly-890–Ser-940, Glu-954–Ala-1029, and Glu-1132–Thr-1162. The span at Asp-378 to Cys-388 shows a compositional bias: polar residues. Residues Pro-442–Pro-454 show a composition bias toward basic and acidic residues. An important for interaction with PRKAR2A region spans residues Gln-482–Ala-504. Residues Ala-530–Glu-547 are compositionally biased toward low complexity. Composition is skewed to polar residues over residues Lys-620 to Pro-638, Cys-654 to Gly-664, and Asp-701 to Asn-711. Residues Ser-769–Glu-780 are compositionally biased toward low complexity. Phosphoserine is present on Ser-776. The residue at position 801 (Thr-801) is a Phosphothreonine. The segment covering Pro-814–Gly-826 has biased composition (basic and acidic residues). The segment covering Glu-839–Pro-849 has biased composition (polar residues). Positions Gly-906–Arg-931 are enriched in basic and acidic residues. Thr-932 is subject to Phosphothreonine. Composition is skewed to polar residues over residues Gln-958 to Thr-972 and Thr-1001 to Ser-1020. Ser-962 carries the post-translational modification Phosphoserine. The important for interaction with PRKAR2A stretch occupies residues Ser-1213 to Gln-1228. Disordered stretches follow at residues Gly-1392–Glu-1411, Leu-1425–Asn-1508, and Ser-1520–Met-1539. Residues Asp-1428–Thr-1439 are compositionally biased toward low complexity. A compositionally biased stretch (polar residues) spans Gly-1449–Phe-1472. Phosphoserine occurs at positions 1450, 1468, 1501, 1526, and 1585. The tract at residues Gln-1546–Asn-1695 is important for interaction with MAP2K3. Positions Gly-1592–Ser-1628 are disordered. Positions Ser-1600–Ser-1611 are enriched in low complexity. 3 positions are modified to phosphoserine: Ser-1625, Ser-1628, and Ser-1630. Lys-1654 is modified (N6-methyllysine). Residues Arg-1733–Thr-1755 form a disordered region. Residues Gly-1753 to Cys-1800 form a Phorbol-ester/DAG-type zinc finger. 3 positions are modified to phosphoserine: Ser-1838, Ser-1857, and Ser-1891. The tract at residues Met-1881 to Cys-2760 is interaction with ESR1. The residue at position 1892 (Thr-1892) is a Phosphothreonine. Phosphoserine occurs at positions 1894 and 1907. One can recognise a DH domain in the interval Lys-1956–Lys-2153. Positions Met-2176 to Asn-2280 constitute a PH domain. Phosphoserine is present on residues Ser-2292 and Ser-2345. Residues Ser-2292–Ile-2329 are a coiled coil. A Phosphothreonine modification is found at Thr-2415. A disordered region spans residues His-2422 to Leu-2450. The segment covering Gln-2439–Leu-2450 has biased composition (basic and acidic residues). Residues Ser-2511 and Ser-2514 each carry the phosphoserine modification. The stretch at Leu-2516–Leu-2632 forms a coiled coil. 2 disordered regions span residues Ala-2568–Leu-2588 and Thr-2660–Cys-2760. Polar residues-rich tracts occupy residues Thr-2660 to Arg-2684 and Ser-2696 to Pro-2711. At Ser-2676 the chain carries Phosphoserine. Low complexity predominate over residues Pro-2743–Pro-2752.

As to quaternary structure, interacts with the cAMP-dependent protein kinase (PKA) holoenzyme and with the regulatory subunit PRKAR2A. Interacts with RHOA. Also interacts with RHOB and RHOC. Identified in a ternary complex with RHOA and PRKAR2A. Identified in a complex with NR3C1 and RHOA. Interacts with BRAF and KSR1. Identified in a complex with BRAF and KSR1. Component of a signaling complex containing at least AKAP13, PKN1, MAPK14, ZAK and MAP2K3. Within this complex, AKAP13 interacts directly with PKN1, which in turn recruits MAPK14, MAP2K3 and ZAK. Interacts (phosphorylated form) with YWHAB and YWHAZ. Interaction with YWHAB inhibits activation of RHOA, interferes with PKN1 binding and activation of MAP kinases. Interacts with GNA12. Interacts with IKBKB. Interacts with ESR1, THRA, PPARA and NME2. Interacts (via the C-terminal domain after the PH domain) with MEF2C and RXRB. Interacts (via the C-terminal domain after the PH domain) with PRKD1. Detected in bone osteoblasts (at protein level).

Its subcellular location is the cytoplasm. It localises to the cytosol. The protein resides in the cell cortex. It is found in the nucleus. The protein localises to the membrane. Functionally, scaffold protein that plays an important role in assembling signaling complexes downstream of several types of G protein-coupled receptors. Activates RHOA in response to signaling via G protein-coupled receptors via its function as Rho guanine nucleotide exchange factor. May also activate other Rho family members. Part of a kinase signaling complex that links ADRA1A and ADRA1B adrenergic receptor signaling to the activation of downstream p38 MAP kinases, such as MAPK11 and MAPK14. Part of a signaling complex that links ADRA1B signaling to the activation of RHOA and IKBKB/IKKB, leading to increased NF-kappa-B transcriptional activity. Part of a RHOA-dependent signaling cascade that mediates responses to lysophosphatidic acid (LPA), a signaling molecule that activates G-protein coupled receptors and potentiates transcriptional activation of the glucocorticoid receptor NR3C1. Part of a signaling cascade that stimulates MEF2C-dependent gene expression in response to lysophosphatidic acid (LPA). Part of a signaling pathway that activates MAPK11 and/or MAPK14 and leads to increased transcription activation of the estrogen receptors ESR1 and ESR2. Part of a signaling cascade that links cAMP and EGFR signaling to BRAF signaling and to PKA-mediated phosphorylation of KSR1, leading to the activation of downstream MAP kinases, such as MAPK1 or MAPK3. Functions as a scaffold protein that anchors cAMP-dependent protein kinase (PKA) and PRKD1. This promotes activation of PRKD1, leading to increased phosphorylation of HDAC5 and ultimately cardiomyocyte hypertrophy. Has no guanine nucleotide exchange activity on CDC42, Ras or Rac. Required for normal embryonic heart development, and in particular for normal sarcomere formation in the developing cardiomyocytes. Plays a role in cardiomyocyte growth and cardiac hypertrophy in response to activation of the beta-adrenergic receptor by phenylephrine or isoproterenol. Required for normal adaptive cardiac hypertrophy in response to pressure overload. Plays a role in osteogenesis. The chain is A-kinase anchor protein 13 from Rattus norvegicus (Rat).